The chain runs to 362 residues: Chorismate synthase (362 aa).

The NADP(+) site is built by Arg-48 and Arg-54. FMN contacts are provided by residues 125-127 (RSS), 238-239 (NA), Gly-278, 293-297 (KPTSS), and Arg-319.

The protein belongs to the chorismate synthase family. Homotetramer. It depends on FMNH2 as a cofactor.

The catalysed reaction is 5-O-(1-carboxyvinyl)-3-phosphoshikimate = chorismate + phosphate. The protein operates within metabolic intermediate biosynthesis; chorismate biosynthesis; chorismate from D-erythrose 4-phosphate and phosphoenolpyruvate: step 7/7. In terms of biological role, catalyzes the anti-1,4-elimination of the C-3 phosphate and the C-6 proR hydrogen from 5-enolpyruvylshikimate-3-phosphate (EPSP) to yield chorismate, which is the branch point compound that serves as the starting substrate for the three terminal pathways of aromatic amino acid biosynthesis. This reaction introduces a second double bond into the aromatic ring system. The polypeptide is Chorismate synthase (Aeromonas salmonicida (strain A449)).